The following is a 452-amino-acid chain: Phosphoglucosamine mutase (452 aa).

Ser112 (phosphoserine intermediate) is an active-site residue. Mg(2+) contacts are provided by Ser112, Asp251, Asp253, and Asp255. Ser112 bears the Phosphoserine mark.

The protein belongs to the phosphohexose mutase family. The cofactor is Mg(2+). Post-translationally, activated by phosphorylation.

The enzyme catalyses alpha-D-glucosamine 1-phosphate = D-glucosamine 6-phosphate. Catalyzes the conversion of glucosamine-6-phosphate to glucosamine-1-phosphate. The sequence is that of Phosphoglucosamine mutase from Bordetella pertussis (strain Tohama I / ATCC BAA-589 / NCTC 13251).